A 201-amino-acid chain; its full sequence is Single-stranded DNA-binding protein, mitochondrial (201 aa).

The 114-residue stretch at 71–184 (VHRAIICGKV…RDGKIRMIKY (114 aa)) folds into the SSB domain.

Its subcellular location is the mitochondrion. Binds to ss-DNA. The chain is Single-stranded DNA-binding protein, mitochondrial from Arabidopsis thaliana (Mouse-ear cress).